A 210-amino-acid polypeptide reads, in one-letter code: ATP-dependent Clp protease proteolytic subunit (210 aa).

The Nucleophile role is filled by Ser-106. Residue His-131 is part of the active site.

Belongs to the peptidase S14 family. Fourteen ClpP subunits assemble into 2 heptameric rings which stack back to back to give a disk-like structure with a central cavity, resembling the structure of eukaryotic proteasomes.

The protein resides in the cytoplasm. It catalyses the reaction Hydrolysis of proteins to small peptides in the presence of ATP and magnesium. alpha-casein is the usual test substrate. In the absence of ATP, only oligopeptides shorter than five residues are hydrolyzed (such as succinyl-Leu-Tyr-|-NHMec, and Leu-Tyr-Leu-|-Tyr-Trp, in which cleavage of the -Tyr-|-Leu- and -Tyr-|-Trp bonds also occurs).. Its function is as follows. Cleaves peptides in various proteins in a process that requires ATP hydrolysis. Has a chymotrypsin-like activity. Plays a major role in the degradation of misfolded proteins. The protein is ATP-dependent Clp protease proteolytic subunit of Azospirillum brasilense.